We begin with the raw amino-acid sequence, 1397 residues long: Protein RhsC (1397 aa).

28 tandem repeats follow at residues 330 to 352 (NTQV…HRHT), 353 to 374 (GRPE…LNPA), 375 to 417 (GLSY…EHAD), 418 to 438 (GSVT…TDAA), 439 to 460 (GRTT…TTPD), 461 to 481 (GRAS…TGPD), 482 to 502 (GLEI…TAPD), 503 to 525 (GDIT…EDAT), 526 to 546 (GSRK…TDCS), 547 to 567 (GYVT…HREE), 568 to 588 (GLSQ…KDTQ), 589 to 609 (GHET…IAPD), 610 to 629 (GSRN…TTQG), 630 to 650 (GLTR…TSEN), 651 to 671 (GSHT…TGFD), 672 to 691 (GRTQ…SEDE), 692 to 711 (GLVT…RTVN), 712 to 734 (GETA…HISE), 735 to 758 (GHRV…LTVH), 808 to 828 (GDTP…LRSF), 829 to 850 (GRYE…HLNS), 851 to 871 (LLSD…ISSP), 872 to 894 (RQTR…TAAN), 895 to 930 (LDIR…NRIA), 931 to 959 (RDAH…VIRT), 960 to 984 (DDER…TQYA), 985 to 1019 (EPLV…MSLS), and 1162 to 1186 (GTTA…HQLQ). The tract at residues 330–1186 (NTQVRSFTYD…LNEENPHQLQ (857 aa)) is 28 X approximate tandem repeats. Positions 1292–1312 (GGQDQRGESKGDGLWGPGKAS) are disordered.

It belongs to the RHS family.

Rhs elements have a nonessential function. They may play an important role in the natural ecology of the cell. This is Protein RhsC (rhsC) from Escherichia coli (strain K12).